The chain runs to 307 residues: ATP synthase gamma chain (307 aa).

The protein belongs to the ATPase gamma chain family. F-type ATPases have 2 components, CF(1) - the catalytic core - and CF(0) - the membrane proton channel. CF(1) has five subunits: alpha(3), beta(3), gamma(1), delta(1), epsilon(1). CF(0) has three main subunits: a, b and c.

Its subcellular location is the cell membrane. Its function is as follows. Produces ATP from ADP in the presence of a proton gradient across the membrane. The gamma chain is believed to be important in regulating ATPase activity and the flow of protons through the CF(0) complex. The polypeptide is ATP synthase gamma chain (Bifidobacterium longum subsp. infantis (strain ATCC 15697 / DSM 20088 / JCM 1222 / NCTC 11817 / S12)).